A 457-amino-acid chain; its full sequence is Autophagy-related protein 14 (457 aa).

A coiled-coil region spans residues 31–109; sequence RIENVMALIE…TRRAALSRRK (79 aa). Disordered stretches follow at residues 54–73, 252–274, and 433–457; these read ETNAPTKDRKDALQAQQRTA, PSQASVSSPSSTTDTESQRVSRP, and NKNLLMGDKSSPRRGTSGWMRVKNR. Positions 253-266 are enriched in low complexity; the sequence is SQASVSSPSSTTDT.

The protein belongs to the ATG14 family. In terms of assembly, component of the autophagy-specific VPS34 PI3-kinase complex I.

It localises to the preautophagosomal structure membrane. The protein localises to the vacuole membrane. Its function is as follows. Required for cytoplasm to vacuole transport (Cvt) and autophagy as a part of the autophagy-specific VPS34 PI3-kinase complex I. This complex is essential to recruit the ATG8-phosphatidylinositol conjugate and the ATG12-ATG5 conjugate to the pre-autophagosomal structure. ATG14 mediates the specific binding of the VPS34 PI3-kinase complex I to the preautophagosomal structure (PAS). Autophagy is required for proper vegetative growth, asexual/sexual reproduction, and full virulence. Autophagy is particularly involved in the biosynthesis of deoxynivalenol (DON), an important virulence determinant. The protein is Autophagy-related protein 14 of Gibberella zeae (strain ATCC MYA-4620 / CBS 123657 / FGSC 9075 / NRRL 31084 / PH-1) (Wheat head blight fungus).